The following is a 218-amino-acid chain: MTDTTLIIRQLGIQDYQQVWQQMREFTDTRNVLTADEIWLVQHPAVFTQGQAGKPEHLLNPTDIPVVQSDRGGQITYHGLGQQIMYVLIDIKRHKANGSELNVRQLVTALEQSVVSTLADYGIKSYPKADAPGVYVNEQKICSLGLRIRKGCSFHGLALNINMDLSPFRQINPCGYIGLEMCQMADFIPTEQAQCDKVAPKLVTHFTQLLGYNDVTTY.

Residues 32–214 (VLTADEIWLV…HFTQLLGYND (183 aa)) form the BPL/LPL catalytic domain. Substrate-binding positions include 71–78 (RGGQITYH), 143–145 (SLG), and 156–158 (GLA). Catalysis depends on Cys174, which acts as the Acyl-thioester intermediate.

Belongs to the LipB family.

It localises to the cytoplasm. The catalysed reaction is octanoyl-[ACP] + L-lysyl-[protein] = N(6)-octanoyl-L-lysyl-[protein] + holo-[ACP] + H(+). It functions in the pathway protein modification; protein lipoylation via endogenous pathway; protein N(6)-(lipoyl)lysine from octanoyl-[acyl-carrier-protein]: step 1/2. Functionally, catalyzes the transfer of endogenously produced octanoic acid from octanoyl-acyl-carrier-protein onto the lipoyl domains of lipoate-dependent enzymes. Lipoyl-ACP can also act as a substrate although octanoyl-ACP is likely to be the physiological substrate. This chain is Octanoyltransferase, found in Histophilus somni (strain 2336) (Haemophilus somnus).